We begin with the raw amino-acid sequence, 641 residues long: Threonine--tRNA ligase (641 aa).

The TGS domain maps to 1–61 (MPAITLPDGS…DDDVQLEIVT (61 aa)). The tract at residues 242–533 (DHRRIGRAQN…LIEHYAGALP (292 aa)) is catalytic. Zn(2+) contacts are provided by Cys333, His384, and His510.

The protein belongs to the class-II aminoacyl-tRNA synthetase family. In terms of assembly, homodimer. Requires Zn(2+) as cofactor.

The protein resides in the cytoplasm. It carries out the reaction tRNA(Thr) + L-threonine + ATP = L-threonyl-tRNA(Thr) + AMP + diphosphate + H(+). Its function is as follows. Catalyzes the attachment of threonine to tRNA(Thr) in a two-step reaction: L-threonine is first activated by ATP to form Thr-AMP and then transferred to the acceptor end of tRNA(Thr). Also edits incorrectly charged L-seryl-tRNA(Thr). This Alkalilimnicola ehrlichii (strain ATCC BAA-1101 / DSM 17681 / MLHE-1) protein is Threonine--tRNA ligase.